Consider the following 1902-residue polypeptide: PII-type proteinase (1902 aa).

Positions 1–33 are cleaved as a signal peptide; it reads MQRKKKGLSILLAGTVALGALAVLPVGEIQAKA. A propeptide spanning residues 34-187 is cleaved from the precursor; the sequence is AISQQTKGSS…VTLAKVYYPT (154 aa). The Peptidase S8 domain maps to 191 to 697; it reads ANSMANVQAV…AGLVDVKAAI (507 aa). Catalysis depends on charge relay system residues aspartate 217, histidine 281, and serine 620. A disordered region spans residues 1796–1874; it reads GKGDGTTGTS…GALPKTGETT (79 aa). The span at 1797-1812 shows a compositional bias: gly residues; it reads KGDGTTGTSDKGGGQG. Polar residues predominate over residues 1830 to 1843; sequence SQPSSGGNIPTNPA. The LPXTG sorting signal motif lies at 1867 to 1871; it reads LPKTG. At threonine 1870 the chain carries Pentaglycyl murein peptidoglycan amidated threonine. The propeptide at 1871–1902 is removed by sortase; the sequence is GETTERPAFGFLGVIVVSLMGVLGLKRKQREE.

It belongs to the peptidase S8 family.

The protein resides in the secreted. It is found in the cell wall. The catalysed reaction is Endopeptidase activity with very broad specificity, although some subsite preference have been noted, e.g. large hydrophobic residues in the P1 and P4 positions, and Pro in the P2 position. Best known for its action on caseins, although it has been shown to hydrolyze hemoglobin and oxidized insulin B-chain.. Its function is as follows. Protease which breaks down milk proteins during the growth of the bacteria on milk. This chain is PII-type proteinase (prt), found in Lactococcus lactis subsp. cremoris (Streptococcus cremoris).